Consider the following 248-residue polypeptide: Phosphate import ATP-binding protein PstB (248 aa).

The region spanning 1 to 243 (MAVNDVNVFY…PQHNLTQGYI (243 aa)) is the ABC transporter domain. Residue 33 to 40 (GPSGCGKS) coordinates ATP.

It belongs to the ABC transporter superfamily. Phosphate importer (TC 3.A.1.7) family. In terms of assembly, the complex is composed of two ATP-binding proteins (PstB), two transmembrane proteins (PstC and PstA) and a solute-binding protein (PstS).

It localises to the cell inner membrane. The enzyme catalyses phosphate(out) + ATP + H2O = ADP + 2 phosphate(in) + H(+). In terms of biological role, part of the ABC transporter complex PstSACB involved in phosphate import. Responsible for energy coupling to the transport system. The protein is Phosphate import ATP-binding protein PstB of Rhodospirillum rubrum (strain ATCC 11170 / ATH 1.1.1 / DSM 467 / LMG 4362 / NCIMB 8255 / S1).